Consider the following 269-residue polypeptide: Orotidine 5'-phosphate decarboxylase (269 aa).

Lys92 acts as the Proton donor in catalysis.

The protein belongs to the OMP decarboxylase family. Type 2 subfamily.

It carries out the reaction orotidine 5'-phosphate + H(+) = UMP + CO2. The protein operates within pyrimidine metabolism; UMP biosynthesis via de novo pathway; UMP from orotate: step 2/2. In Natronomonas pharaonis (strain ATCC 35678 / DSM 2160 / CIP 103997 / JCM 8858 / NBRC 14720 / NCIMB 2260 / Gabara) (Halobacterium pharaonis), this protein is Orotidine 5'-phosphate decarboxylase.